The following is a 732-amino-acid chain: Inducible ornithine decarboxylase (732 aa).

An N6-(pyridoxal phosphate)lysine modification is found at lysine 355.

This sequence belongs to the Orn/Lys/Arg decarboxylase class-I family. Requires pyridoxal 5'-phosphate as cofactor.

It catalyses the reaction L-ornithine + H(+) = putrescine + CO2. Its pathway is amine and polyamine biosynthesis; putrescine biosynthesis via L-ornithine pathway; putrescine from L-ornithine: step 1/1. In terms of biological role, the first enzyme leading to putrescine and thus polyamine synthesis. The protein is Inducible ornithine decarboxylase of Escherichia coli (strain K12).